The sequence spans 367 residues: Alanine racemase (367 aa).

Catalysis depends on K35, which acts as the Proton acceptor; specific for D-alanine. N6-(pyridoxal phosphate)lysine is present on K35. R130 is a substrate binding site. Y258 (proton acceptor; specific for L-alanine) is an active-site residue. M306 is a substrate binding site.

It belongs to the alanine racemase family. Pyridoxal 5'-phosphate is required as a cofactor.

It carries out the reaction L-alanine = D-alanine. Its pathway is amino-acid biosynthesis; D-alanine biosynthesis; D-alanine from L-alanine: step 1/1. Catalyzes the interconversion of L-alanine and D-alanine. May also act on other amino acids. The sequence is that of Alanine racemase (alr) from Acinetobacter baumannii (strain SDF).